The chain runs to 218 residues: Uracil-DNA glycosylase (218 aa).

The Proton acceptor role is filled by aspartate 60.

The protein belongs to the uracil-DNA glycosylase (UDG) superfamily. UNG family.

Its subcellular location is the cytoplasm. The catalysed reaction is Hydrolyzes single-stranded DNA or mismatched double-stranded DNA and polynucleotides, releasing free uracil.. Its function is as follows. Excises uracil residues from the DNA which can arise as a result of misincorporation of dUMP residues by DNA polymerase or due to deamination of cytosine. This is Uracil-DNA glycosylase from Shewanella oneidensis (strain ATCC 700550 / JCM 31522 / CIP 106686 / LMG 19005 / NCIMB 14063 / MR-1).